Reading from the N-terminus, the 306-residue chain is Porphobilinogen deaminase (306 aa).

At Cys-234 the chain carries S-(dipyrrolylmethanemethyl)cysteine.

The protein belongs to the HMBS family. In terms of assembly, monomer. Dipyrromethane is required as a cofactor.

The enzyme catalyses 4 porphobilinogen + H2O = hydroxymethylbilane + 4 NH4(+). The protein operates within porphyrin-containing compound metabolism; protoporphyrin-IX biosynthesis; coproporphyrinogen-III from 5-aminolevulinate: step 2/4. Functionally, tetrapolymerization of the monopyrrole PBG into the hydroxymethylbilane pre-uroporphyrinogen in several discrete steps. This Mycobacteroides abscessus (strain ATCC 19977 / DSM 44196 / CCUG 20993 / CIP 104536 / JCM 13569 / NCTC 13031 / TMC 1543 / L948) (Mycobacterium abscessus) protein is Porphobilinogen deaminase.